A 59-amino-acid chain; its full sequence is Ferredoxin (59 aa).

4Fe-4S ferredoxin-type domains are found at residues 2-30 (GKITIVNIDDCVACGACSGTCPQSVLEVN) and 31-59 (DHVEIKNPDDCIGCGACVDACPQGVLKVE). [4Fe-4S] cluster contacts are provided by Cys-12, Cys-15, Cys-18, Cys-22, Cys-41, Cys-44, Cys-47, and Cys-51.

The cofactor is [4Fe-4S] cluster.

Functionally, ferredoxins are iron-sulfur proteins that transfer electrons in a wide variety of metabolic reactions. This chain is Ferredoxin, found in Entamoeba histolytica (strain ATCC 30459 / HM-1:IMSS / ABRM).